We begin with the raw amino-acid sequence, 148 residues long: Single-stranded DNA-binding protein, mitochondrial (148 aa).

A mitochondrion-targeting transit peptide spans 1–16 (MFRRPVLQVLRQFVRH). The SSB domain maps to 30–141 (LNRVHLLGRV…IIADNIIFLS (112 aa)). Residues S67 and S79 each carry the phosphoserine modification. K113 is modified (N6-acetyllysine). An N6-succinyllysine modification is found at K122.

In terms of assembly, homotetramer. Interacts with MPG/AAG, through inhibition of its glycosylase activity it potentially prevents formation of DNA breaks in ssDNA, ensuring that base removal primarily occurs in dsDNA. Interacts with POLDIP2. Interacts with PRIMPOL.

The protein resides in the mitochondrion. It localises to the mitochondrion matrix. The protein localises to the mitochondrion nucleoid. Its function is as follows. Binds preferentially and cooperatively to pyrimidine rich single-stranded DNA (ss-DNA). In vitro, required to maintain the copy number of mitochondrial DNA (mtDNA) and plays a crucial role during mtDNA replication by stimulating the activity of the replisome components POLG and TWNK at the replication fork. Promotes the activity of the gamma complex polymerase POLG, largely by organizing the template DNA and eliminating secondary structures to favor ss-DNA conformations that facilitate POLG activity. In addition it is able to promote the 5'-3' unwinding activity of the mtDNA helicase TWNK. May also function in mtDNA repair. This Pongo abelii (Sumatran orangutan) protein is Single-stranded DNA-binding protein, mitochondrial (SSBP1).